The chain runs to 377 residues: Homoserine O-succinyltransferase (377 aa).

The 312-residue stretch at asparagine 45–aspartate 356 folds into the AB hydrolase-1 domain. Serine 151 (nucleophile) is an active-site residue. Position 221 (arginine 221) interacts with substrate. Active-site residues include aspartate 317 and histidine 350. Aspartate 351 contacts substrate.

It belongs to the AB hydrolase superfamily. MetX family. In terms of assembly, homodimer.

The protein resides in the cytoplasm. The catalysed reaction is L-homoserine + succinyl-CoA = O-succinyl-L-homoserine + CoA. The protein operates within amino-acid biosynthesis; L-methionine biosynthesis via de novo pathway; O-succinyl-L-homoserine from L-homoserine: step 1/1. Functionally, transfers a succinyl group from succinyl-CoA to L-homoserine, forming succinyl-L-homoserine. This is Homoserine O-succinyltransferase from Leptothrix cholodnii (strain ATCC 51168 / LMG 8142 / SP-6) (Leptothrix discophora (strain SP-6)).